Here is a 337-residue protein sequence, read N- to C-terminus: Major outer membrane protein P.IB (337 aa).

The first 19 residues, 1 to 19 (MKKSLIALTLAALPVAAMA), serve as a signal peptide directing secretion.

The protein belongs to the Gram-negative porin family. Homotrimer.

It localises to the cell outer membrane. Serves as a slightly cation selective porin. The protein is Major outer membrane protein P.IB (por) of Neisseria lactamica.